The sequence spans 795 residues: Protocadherin beta-4 (795 aa).

An N-terminal signal peptide occupies residues 1-27 (MKKLGRIHPNRQVLAFILMVFLSQVRL). The Extracellular segment spans residues 28–689 (EPIRYSVLEE…AQADSLTVYL (662 aa)). Cadherin domains are found at residues 34–132 (VLEE…SPIF), 137–241 (VLLK…APEF), 246–346 (YGVQ…PPEL), 351–450 (LTSS…APAF), and 455–560 (YTLF…SPFV). Asn183 carries N-linked (GlcNAc...) asparagine glycosylation. Residues Asn417 and Asn435 are each glycosylated (N-linked (GlcNAc...) asparagine). Asn566 carries N-linked (GlcNAc...) asparagine glycosylation. Residues 567–670 (GSAPCTELVP…LVDGFSQPYL (104 aa)) form the Cadherin 6 domain. A helical membrane pass occupies residues 690 to 710 (VVALASVSSLFLFSVLLFVAV). The Cytoplasmic segment spans residues 711-795 (RLCRRSRAAS…PKFRNSLVFS (85 aa)).

Its subcellular location is the cell membrane. Its function is as follows. Potential calcium-dependent cell-adhesion protein. May be involved in the establishment and maintenance of specific neuronal connections in the brain. The chain is Protocadherin beta-4 (PCDHB4) from Homo sapiens (Human).